The chain runs to 189 residues: Elongation factor P (189 aa).

The protein belongs to the elongation factor P family.

It is found in the cytoplasm. The protein operates within protein biosynthesis; polypeptide chain elongation. Its function is as follows. Involved in peptide bond synthesis. Stimulates efficient translation and peptide-bond synthesis on native or reconstituted 70S ribosomes in vitro. Probably functions indirectly by altering the affinity of the ribosome for aminoacyl-tRNA, thus increasing their reactivity as acceptors for peptidyl transferase. In Pseudomonas syringae pv. syringae (strain B728a), this protein is Elongation factor P.